A 117-amino-acid polypeptide reads, in one-letter code: MKIRCGTDILRVSRIKNIKNLDKFMKKVFTEREISYIESKNRSFETITGMFCMKEAVSKALKTGIGKMSFMDVESIHDDGLVVKLNTDKFPKVLDIDASISHDGEYAVAMCVLMLED.

Positions 8 and 55 each coordinate Mg(2+).

The protein belongs to the P-Pant transferase superfamily. AcpS family. Requires Mg(2+) as cofactor.

It is found in the cytoplasm. It carries out the reaction apo-[ACP] + CoA = holo-[ACP] + adenosine 3',5'-bisphosphate + H(+). Functionally, transfers the 4'-phosphopantetheine moiety from coenzyme A to a Ser of acyl-carrier-protein. This is Holo-[acyl-carrier-protein] synthase from Finegoldia magna (strain ATCC 29328 / DSM 20472 / WAL 2508) (Peptostreptococcus magnus).